A 21-amino-acid chain; its full sequence is MAIIIGLEFAQLPMSFGAKYE.

The chain is Protein YadW from Escherichia coli (strain K12).